The chain runs to 804 residues: Endoplasmin (804 aa).

An N-terminal signal peptide occupies residues 1 to 21; the sequence is MRALWVLGLCCVLLTFGSVRA. The SRT pseudosubstrate motif motif lies at 42 to 44; it reads SRT. Asparagine 62 carries an N-linked (GlcNAc...) asparagine glycan. Phosphoserine is present on serine 64. N-linked (GlcNAc...) asparagine glycosylation is present at asparagine 107. ATP-binding residues include asparagine 107, aspartate 149, and asparagine 162. N6-(2-hydroxyisobutyryl)lysine is present on lysine 168. Phosphoserine is present on serine 172. Phenylalanine 199 serves as a coordination point for ATP. Residue asparagine 217 is glycosylated (N-linked (GlcNAc...) asparagine). Positions 288 to 323 are disordered; it reads TVEEPMEEEEAAKEEKEESDDEAAVEEEEEEKKPKT. The segment covering 289–317 has biased composition (acidic residues); the sequence is VEEPMEEEEAAKEEKEESDDEAAVEEEEE. Phosphoserine occurs at positions 306 and 403. N6-succinyllysine is present on lysine 404. N-linked (GlcNAc...) asparagine glycosylation is present at asparagine 445. Phosphoserine is present on serine 447. The residue at position 479 (lysine 479) is an N6-acetyllysine. Residues asparagine 481 and asparagine 502 are each glycosylated (N-linked (GlcNAc...) asparagine). Position 633 is an N6-succinyllysine (lysine 633). Residues 750-804 form a disordered region; that stretch reads DPDAKVEEEPEEEPEETTEDTTEDTEQDEDEEMDVGTDEEEQETAKESTAEKDEL. Over residues 757–791 the composition is skewed to acidic residues; sequence EEPEEEPEETTEDTTEDTEQDEDEEMDVGTDEEEQ. Threonine 786 carries the phosphothreonine modification. Residues 792 to 804 are compositionally biased toward basic and acidic residues; the sequence is ETAKESTAEKDEL. The Prevents secretion from ER signature appears at 801–804; the sequence is KDEL.

The protein belongs to the heat shock protein 90 family. In terms of assembly, homodimer; disulfide-linked. Component of an EIF2 complex at least composed of CELF1/CUGBP1, CALR, CALR3, EIF2S1, EIF2S2, HSP90B1 and HSPA5. Part of a large chaperone multiprotein complex comprising DNAJB11, HSP90B1, HSPA5, HYOU, PDIA2, PDIA4, PDIA6, PPIB, SDF2L1, UGGT1 and very small amounts of ERP29, but not, or at very low levels, CALR nor CANX. Interacts with AIMP1; regulates its retention in the endoplasmic reticulum. Hyperglycosylated form interacts with OS9; promoting its degradation by the endoplasmic reticulum associated degradation (ERAD). Interacts with CNPY3. This interaction is disrupted in the presence of ATP. Interacts with TLR4 and TLR9, but not with TLR3. Interacts with MZB1 in a calcium-dependent manner. Interacts with METTL23. Interacts with IL1B; the interaction facilitates cargo translocation into the ERGIC. Interacts with EIF2AK3. Post-translationally, phosphorylated by CK2. In terms of processing, N-glycosylated cotranslationally at Asn-217 by STT3A-containing OST-A complex: this glycosylation is constitutive. In response to various stress, 5 additional facultative sites (Asn-62, Asn-107, Asn-445, Asn-481 and Asn-502) can be glycosylated post-translationally by STT3B-containing OST-B complex, leading to a hyperglycosylated form that is degraded by the ER-associated degradation (ERAD) pathway. In normal conditions, the OST-A complex together with CCDC134 prevent glycosylation at facultative sites during protein folding, thereby preventing hyperglycosylation. Mechanistically, nascent HSP90B1 is tethered during translation to a specialized CCDC134-containing translocon that forms a microenvironment for its folding, in which STT3A associates with the SRT pseudosubstrate motif, and prevents access to facultative glycosylation sites until folding is completed, rendering its facultative sites inaccessible to the OST-B complex.

It localises to the endoplasmic reticulum lumen. It is found in the sarcoplasmic reticulum lumen. The protein localises to the melanosome. It carries out the reaction ATP + H2O = ADP + phosphate + H(+). Its function is as follows. ATP-dependent chaperone involved in the processing of proteins in the endoplasmic reticulum, regulating their transport. Together with MESD, acts as a modulator of the Wnt pathway by promoting the folding of LRP6, a coreceptor of the canonical Wnt pathway. When associated with CNPY3, required for proper folding of Toll-like receptors. Promotes folding and trafficking of TLR4 to the cell surface. May participate in the unfolding of cytosolic leaderless cargos (lacking the secretion signal sequence) such as the interleukin 1/IL-1 to facilitate their translocation into the ERGIC (endoplasmic reticulum-Golgi intermediate compartment) and secretion; the translocation process is mediated by the cargo receptor TMED10. The polypeptide is Endoplasmin (HSP90B1) (Pongo abelii (Sumatran orangutan)).